The primary structure comprises 412 residues: uncharacterized protein (412 aa).

Residues 1-17 (MPSQGNNKNSENITQNP) are compositionally biased toward polar residues. Disordered stretches follow at residues 1-20 (MPSQ…PIEG), 223-243 (EQAV…ARQT), and 310-412 (QKQM…NPVA). Positions 340-355 (KLNSNTRGSSKRPSVN) are enriched in polar residues. The segment covering 361 to 379 (GQRGRGGRGFYRGGRGRGG) has biased composition (gly residues). A compositionally biased stretch (low complexity) spans 390–402 (SNSNNSTSQPSPN). Residues 403–412 (AELSNFNPVA) show a composition bias toward polar residues.

This is an uncharacterized protein from Schizosaccharomyces pombe (strain 972 / ATCC 24843) (Fission yeast).